We begin with the raw amino-acid sequence, 152 residues long: D-aminoacyl-tRNA deacylase (152 aa).

The Gly-cisPro motif, important for rejection of L-amino acids signature appears at 142–143 (GP).

Belongs to the DTD family. As to quaternary structure, homodimer.

The protein localises to the cytoplasm. The catalysed reaction is glycyl-tRNA(Ala) + H2O = tRNA(Ala) + glycine + H(+). It catalyses the reaction a D-aminoacyl-tRNA + H2O = a tRNA + a D-alpha-amino acid + H(+). An aminoacyl-tRNA editing enzyme that deacylates mischarged D-aminoacyl-tRNAs. Also deacylates mischarged glycyl-tRNA(Ala), protecting cells against glycine mischarging by AlaRS. Acts via tRNA-based rather than protein-based catalysis; rejects L-amino acids rather than detecting D-amino acids in the active site. By recycling D-aminoacyl-tRNA to D-amino acids and free tRNA molecules, this enzyme counteracts the toxicity associated with the formation of D-aminoacyl-tRNA entities in vivo and helps enforce protein L-homochirality. The chain is D-aminoacyl-tRNA deacylase from Burkholderia lata (strain ATCC 17760 / DSM 23089 / LMG 22485 / NCIMB 9086 / R18194 / 383).